The primary structure comprises 312 residues: Olfactory receptor 1D2 (312 aa).

Residues 1–25 (MDGGNQSEGSEFLLLGMSESPEQQR) lie on the Extracellular side of the membrane. N5 carries an N-linked (GlcNAc...) asparagine glycan. The helical transmembrane segment at 26–49 (ILFWMFLSMYLVTVVGNVLIILAI) threads the bilayer. Residues 50–57 (SSDSRLHT) lie on the Cytoplasmic side of the membrane. A helical membrane pass occupies residues 58-79 (PVYFFLANLSFTDLFFVTNTIP). The Extracellular segment spans residues 80 to 100 (KMLVNLQSHNKAISYAGCLTQ). A disulfide bridge links C97 with C189. Residues 101–120 (LYFLVSLVALDNLILAVMAY) traverse the membrane as a helical segment. Over 121–139 (DRYVAICCPLHYTTAMSPK) the chain is Cytoplasmic. Residues 140–158 (LCILLLSLCWVLSVLYGLI) traverse the membrane as a helical segment. Topologically, residues 159–196 (HTLLMTRVTFCGSRKIHYIFCEMYVLLRMACSNIQINH) are extracellular. N195 carries an N-linked (GlcNAc...) asparagine glycan. The helical transmembrane segment at 197–219 (TVLIATGCFIFLIPFGFVIISYV) threads the bilayer. The Cytoplasmic portion of the chain corresponds to 220-236 (LIIRAILRIPSVSKKYK). Residues 237 to 259 (AFSTCASHLGAVSLFYGTLCMVY) traverse the membrane as a helical segment. At 260-271 (LKPLHTYSVKDS) the chain is on the extracellular side. A helical transmembrane segment spans residues 272–291 (VATVMYAVVTPMMNPFIYSL). The Cytoplasmic segment spans residues 292–312 (RNKDMHGALGRLLDKHFKRLT).

It belongs to the G-protein coupled receptor 1 family. In terms of tissue distribution, expressed in testis. Expressed in spermatozoa (at protein level). Expressed in olfactory epithelium.

It is found in the cell membrane. Odorant receptor which may be involved in sperm chemotaxis. Bourgeonal is a strong chemoattractant for sperm in vitro and is shown to be a strong agonist for OR1D2 in vitro. May also function in olfactory reception. The chain is Olfactory receptor 1D2 (OR1D2) from Homo sapiens (Human).